Consider the following 57-residue polypeptide: DNA gyrase inhibitor YacG (57 aa).

Zn(2+) is bound by residues Cys10, Cys13, Cys25, and Cys29.

The protein belongs to the DNA gyrase inhibitor YacG family. Interacts with GyrB. Zn(2+) serves as cofactor.

In terms of biological role, inhibits all the catalytic activities of DNA gyrase by preventing its interaction with DNA. Acts by binding directly to the C-terminal domain of GyrB, which probably disrupts DNA binding by the gyrase. The chain is DNA gyrase inhibitor YacG from Brucella abortus (strain 2308).